The chain runs to 188 residues: SRP-independent targeting protein 3 (188 aa).

Residues 27 to 47 form a helical membrane-spanning segment; sequence TIIMYIRILYCSSIGISWIIY. Ser-157 carries the phosphoserine modification. Positions 157–188 are disordered; that stretch reads SLFGGMGQTGPKTDKKSIEEAERAGNAGVKAE. Residues 168–179 show a composition bias toward basic and acidic residues; sequence KTDKKSIEEAER.

Belongs to the PHO88 family. As to quaternary structure, interacts with ENV10/SND2. ENV10/SND2 and PHO88/SND3 form a complex with the translocon in the endoplasmic reticulum membrane.

It is found in the endoplasmic reticulum membrane. The protein localises to the mitochondrion. Functions in the SND pathway, a SRP (signal recognition particle) and GET (guided entry of tail-anchored proteins) independent pathway for targeting a broad range of substrate proteins to the endoplasmic reticulum. SND functions in parallel to GET in targeting proteins with downstream hydrophobic motifs. Involved in inorganic phosphate uptake. Also involved in telomere length regulation and maintenance. This Saccharomyces cerevisiae (strain ATCC 204508 / S288c) (Baker's yeast) protein is SRP-independent targeting protein 3.